The primary structure comprises 179 residues: Orotate phosphoribosyltransferase (179 aa).

5-phospho-alpha-D-ribose 1-diphosphate-binding positions include Arg-94, Lys-95, Lys-98, His-100, and 120–128 (EDTSTTGAS). Thr-124 and Arg-152 together coordinate orotate.

It belongs to the purine/pyrimidine phosphoribosyltransferase family. PyrE subfamily. In terms of assembly, homodimer. Requires Mg(2+) as cofactor.

The enzyme catalyses orotidine 5'-phosphate + diphosphate = orotate + 5-phospho-alpha-D-ribose 1-diphosphate. It functions in the pathway pyrimidine metabolism; UMP biosynthesis via de novo pathway; UMP from orotate: step 1/2. In terms of biological role, catalyzes the transfer of a ribosyl phosphate group from 5-phosphoribose 1-diphosphate to orotate, leading to the formation of orotidine monophosphate (OMP). The protein is Orotate phosphoribosyltransferase of Mycobacterium leprae (strain TN).